The sequence spans 346 residues: C5a anaphylatoxin chemotactic receptor 1 (346 aa).

At 1–33 the chain is on the extracellular side; the sequence is MDDNNSDWTSYDFGNDTIPSPNEISLSHIGTRH. 2 N-linked (GlcNAc...) asparagine glycosylation sites follow: asparagine 4 and asparagine 15. A helical membrane pass occupies residues 34–60; that stretch reads WITLVCYGIVFLLGVPGNALVVWVTGF. The Cytoplasmic portion of the chain corresponds to 61–65; sequence RMPNS. The helical transmembrane segment at 66–89 threads the bilayer; it reads VNAQWFLNLAIADLLCCLSLPILM. Topologically, residues 90-106 are extracellular; it reads VPLAQDQHWPFGALACK. Cysteine 105 and cysteine 183 form a disulfide bridge. Residues 107 to 128 traverse the membrane as a helical segment; it reads LFSGIFYMMMYCSVLLLVVISL. The Cytoplasmic segment spans residues 129–149; it reads DRFLLVTKPVWCQNNRQPRQA. A helical transmembrane segment spans residues 150–170; that stretch reads RILCFIIWILGLLGSSPYFAH. Residues 171 to 194 lie on the Extracellular side of the membrane; sequence MEIQHHSETKTVCTGSYSSLGHAW. The helical transmembrane segment at 195–220 threads the bilayer; it reads AITIIRSFLFFLLPFLIICISHWKVY. Residues 221–238 are Cytoplasmic-facing; that stretch reads HMTSSGRRQRDKSSRTLR. Residues 239–261 form a helical membrane-spanning segment; it reads VILALVLGFFLCWTPLHIVDLLI. Residues 262-279 lie on the Extracellular side of the membrane; it reads LVSDQPSERFEVNLNLAH. A helical transmembrane segment spans residues 280-300; sequence VLTLCLAYINSCLNPLLYVCL. Residues 301 to 346 are Cytoplasmic-facing; that stretch reads GRGFKENLISSLRSVLHFASEAPTHGPSMTTNSKSTTDGVFREKPV. The disordered stretch occupies residues 323–346; that stretch reads PTHGPSMTTNSKSTTDGVFREKPV. The segment covering 327–338 has biased composition (polar residues); it reads PSMTTNSKSTTD.

The protein belongs to the G-protein coupled receptor 1 family.

The protein localises to the cell membrane. Its function is as follows. Receptor for the chemotactic and inflammatory peptide anaphylatoxin C5a. This receptor stimulates chemotaxis, granule enzyme release and superoxide anion production. In Danio rerio (Zebrafish), this protein is C5a anaphylatoxin chemotactic receptor 1 (c5ar1).